The primary structure comprises 382 residues: Galactokinase (382 aa).

Residue 34–37 (EHTD) participates in substrate binding. 124 to 130 (GAGLSSS) contributes to the ATP binding site. Mg(2+) is bound by residues serine 130 and glutamate 162. Aspartate 174 functions as the Proton acceptor in the catalytic mechanism. Residue tyrosine 223 participates in substrate binding.

This sequence belongs to the GHMP kinase family. GalK subfamily.

Its subcellular location is the cytoplasm. The catalysed reaction is alpha-D-galactose + ATP = alpha-D-galactose 1-phosphate + ADP + H(+). It participates in carbohydrate metabolism; galactose metabolism. In terms of biological role, catalyzes the transfer of the gamma-phosphate of ATP to D-galactose to form alpha-D-galactose-1-phosphate (Gal-1-P). The protein is Galactokinase of Shigella flexneri serotype 5b (strain 8401).